The primary structure comprises 646 residues: Epithelial sodium channel subunit beta-2 (646 aa).

The Cytoplasmic portion of the chain corresponds to 1-57 (MIQGKLKRLKRYFTRALHRIQKGPGYTYKELLVWFCDNTNTHGPKRIIKEGPKKRVM). A helical transmembrane segment spans residues 58–78 (WFILTLVFAGLVFWQWGLLIL). The Extracellular portion of the chain corresponds to 79 to 551 (TYLSYGVSVS…GGQFGFWMGG (473 aa)). 8 disulfides stabilise this stretch: cysteine 104/cysteine 290, cysteine 214/cysteine 221, cysteine 267/cysteine 274, cysteine 380/cysteine 467, cysteine 405/cysteine 463, cysteine 409/cysteine 459, cysteine 418/cysteine 445, and cysteine 420/cysteine 434. The chain crosses the membrane as a helical span at residues 552–572 (SVLCIIEFGEIIIDCMWITIL). At 573–646 (KLLAWIRNRR…IEPVSSDEEN (74 aa)) the chain is on the cytoplasmic side. A disordered region spans residues 586–646 (QRPQYADPPP…IEPVSSDEEN (61 aa)). Basic and acidic residues predominate over residues 610–619 (QHDDGNHVTE).

The protein belongs to the amiloride-sensitive sodium channel (TC 1.A.6) family. SCNN1B subfamily. As to quaternary structure, component of the heterotrimeric epithelial sodium channel (ENaC) composed of an alpha/SCNN1A, a beta/SCNN1B and a gamma/SCNN1G subunit.

The protein localises to the apical cell membrane. Its subcellular location is the cytoplasmic vesicle membrane. It catalyses the reaction Na(+)(in) = Na(+)(out). Originally identified and characterized by its inhibition by the diuretic drug amiloride. This is one of the three pore-forming subunits of the heterotrimeric epithelial sodium channel (ENaC), a critical regulator of sodium balance and fluid homeostasis. ENaC operates in epithelial tissues, where it mediates the electrodiffusion of sodium ions from extracellular fluid through the apical membrane of cells, with water following osmotically. The sequence is that of Epithelial sodium channel subunit beta-2 (scnn1b-b) from Xenopus laevis (African clawed frog).